The following is a 294-amino-acid chain: Acetylglutamate kinase (294 aa).

Substrate-binding positions include Gly67–Gly68, Arg89, and Asn191.

This sequence belongs to the acetylglutamate kinase family. ArgB subfamily.

The protein localises to the cytoplasm. It catalyses the reaction N-acetyl-L-glutamate + ATP = N-acetyl-L-glutamyl 5-phosphate + ADP. Its pathway is amino-acid biosynthesis; L-arginine biosynthesis; N(2)-acetyl-L-ornithine from L-glutamate: step 2/4. Its function is as follows. Catalyzes the ATP-dependent phosphorylation of N-acetyl-L-glutamate. The sequence is that of Acetylglutamate kinase from Methylobacillus flagellatus (strain ATCC 51484 / DSM 6875 / VKM B-1610 / KT).